Consider the following 471-residue polypeptide: Desmin (471 aa).

The segment at 2 to 109 (SQAYSSSQRV…QEFLTTRTNE (108 aa)) is head. Ser-7 carries the post-translational modification Phosphoserine; by CDK1. Ser-12 is modified (phosphoserine; by AURKB). Arg-16 carries the post-translational modification Omega-N-methylarginine. At Thr-17 the chain carries Phosphothreonine; by AURKB and ROCK1. Residue Ser-28 is modified to Phosphoserine; by CDK1. The residue at position 31 (Ser-31) is a Phosphoserine. At Ser-32 the chain carries Phosphoserine; by CDK1. The residue at position 37 (Arg-37) is an Asymmetric dimethylarginine; alternate. Residue Arg-37 is modified to Omega-N-methylarginine; alternate. At Ser-45 the chain carries Phosphoserine. An ADP-ribosylarginine modification is found at Arg-58. Ser-60 bears the Phosphoserine; by AURKB mark. Arg-70 carries the post-translational modification Omega-N-methylarginine. Phosphothreonine; by ROCK1 is present on Thr-77. Ser-81 is modified (phosphoserine). The 309-residue stretch at 109–417 (EKVELQELND…KLLEGEESRI (309 aa)) folds into the IF rod domain. The segment at 110-142 (KVELQELNDRFANYIEKVRFLEQQNAALAAEVN) is coil 1A. Residues 143 to 152 (RLKGREPTRV) are linker 1. The interval 153–253 (AEIYEEELRE…HEEEIRELQA (101 aa)) is coil 1B. The linker 12 stretch occupies residues 254-269 (QLQEQQVQVEMDMSKP). The interaction with NEB stretch occupies residues 269-416 (PDLTAALRDI…RKLLEGEESR (148 aa)). A coil 2A region spans residues 270–288 (DLTAALRDIRAQYETIAAK). Residues 289-296 (NISEAEEW) are linker 2. Phosphoserine occurs at positions 291, 359, 362, and 425. A coil 2B region spans residues 297–413 (YKSKVSDLTQ…ATYRKLLEGE (117 aa)). The tail stretch occupies residues 414-471 (ESRINLPIQTFSALNFRETSPEQRGSEVHTKKTVMIKTIETRDGEVVSEATQQQHEVL). Residues 439 to 454 (SEVHTKKTVMIKTIET) form an interaction with CRYAB region.

It belongs to the intermediate filament family. As to quaternary structure, homomer. Interacts with DST. Interacts with MTM1. Interacts with EPPK1; interaction is dependent of higher-order structure of intermediate filament. Interacts with CRYAB. Interacts with NEB (via nebulin repeats 160-164). Interacts (via rod region) with NEBL (via nebulin repeats 1-5). Interacts with ASB2; the interaction targets DES for proteasomal degradation. Interacts with PKP1. Interacts with FLII. ADP-ribosylation prevents ability to form intermediate filaments. Post-translationally, phosphorylation at Ser-7, Ser-28 and Ser-32 by CDK1 and phosphorylation at Ser-60 by AURKB contribute to efficient separation of desmin intermediate filaments during mitosis. In terms of processing, ubiquitination by a SCF-like complex containing ASB2 leads to proteasomal degradation.

The protein localises to the cytoplasm. Its subcellular location is the myofibril. It localises to the sarcomere. It is found in the z line. The protein resides in the cell membrane. The protein localises to the sarcolemma. Its subcellular location is the nucleus. It localises to the cell tip. It is found in the nucleus envelope. Muscle-specific type III intermediate filament essential for proper muscular structure and function. Plays a crucial role in maintaining the structure of sarcomeres, inter-connecting the Z-disks and forming the myofibrils, linking them not only to the sarcolemmal cytoskeleton, but also to the nucleus and mitochondria, thus providing strength for the muscle fiber during activity. In adult striated muscle they form a fibrous network connecting myofibrils to each other and to the plasma membrane from the periphery of the Z-line structures. May act as a sarcomeric microtubule-anchoring protein: specifically associates with detyrosinated tubulin-alpha chains, leading to buckled microtubules and mechanical resistance to contraction. Required for nuclear membrane integrity, via anchoring at the cell tip and nuclear envelope, resulting in maintenance of microtubule-derived intracellular mechanical forces. Contributes to the transcriptional regulation of the NKX2-5 gene in cardiac progenitor cells during a short period of cardiomyogenesis and in cardiac side population stem cells in the adult. Plays a role in maintaining an optimal conformation of nebulette (NEB) on heart muscle sarcomeres to bind and recruit cardiac alpha-actin. This Sus scrofa (Pig) protein is Desmin (DES).